Consider the following 431-residue polypeptide: Arginine biosynthesis bifunctional protein ArgJ, mitochondrial (431 aa).

The substrate site is built by Thr174, Lys200, Thr211, Glu297, Asn426, and Thr431. Thr211 serves as the catalytic Nucleophile.

Belongs to the ArgJ family. In terms of assembly, heterodimer of an alpha and a beta chain. The alpha and beta chains are autoproteolytically processed from a single precursor protein within the mitochondrion.

Its subcellular location is the mitochondrion matrix. It carries out the reaction N(2)-acetyl-L-ornithine + L-glutamate = N-acetyl-L-glutamate + L-ornithine. The enzyme catalyses L-glutamate + acetyl-CoA = N-acetyl-L-glutamate + CoA + H(+). It functions in the pathway amino-acid biosynthesis; L-arginine biosynthesis; L-ornithine and N-acetyl-L-glutamate from L-glutamate and N(2)-acetyl-L-ornithine (cyclic): step 1/1. Its pathway is amino-acid biosynthesis; L-arginine biosynthesis; N(2)-acetyl-L-ornithine from L-glutamate: step 1/4. In terms of biological role, catalyzes two activities which are involved in the cyclic version of arginine biosynthesis: the synthesis of acetylglutamate from glutamate and acetyl-CoA, and of ornithine by transacetylation between acetylornithine and glutamate. This is Arginine biosynthesis bifunctional protein ArgJ, mitochondrial from Yarrowia lipolytica (strain CLIB 122 / E 150) (Yeast).